Reading from the N-terminus, the 251-residue chain is Ubiquinone/menaquinone biosynthesis C-methyltransferase UbiE (251 aa).

Residues Thr-74, Asp-95, 123-124, and Ser-140 each bind S-adenosyl-L-methionine; that span reads NA.

The protein belongs to the class I-like SAM-binding methyltransferase superfamily. MenG/UbiE family.

The catalysed reaction is a 2-demethylmenaquinol + S-adenosyl-L-methionine = a menaquinol + S-adenosyl-L-homocysteine + H(+). It catalyses the reaction a 2-methoxy-6-(all-trans-polyprenyl)benzene-1,4-diol + S-adenosyl-L-methionine = a 5-methoxy-2-methyl-3-(all-trans-polyprenyl)benzene-1,4-diol + S-adenosyl-L-homocysteine + H(+). It functions in the pathway quinol/quinone metabolism; menaquinone biosynthesis; menaquinol from 1,4-dihydroxy-2-naphthoate: step 2/2. Its pathway is cofactor biosynthesis; ubiquinone biosynthesis. Methyltransferase required for the conversion of demethylmenaquinol (DMKH2) to menaquinol (MKH2) and the conversion of 2-polyprenyl-6-methoxy-1,4-benzoquinol (DDMQH2) to 2-polyprenyl-3-methyl-6-methoxy-1,4-benzoquinol (DMQH2). This is Ubiquinone/menaquinone biosynthesis C-methyltransferase UbiE from Salmonella arizonae (strain ATCC BAA-731 / CDC346-86 / RSK2980).